A 357-amino-acid polypeptide reads, in one-letter code: Probable GTP 3',8-cyclase (357 aa).

The 230-residue stretch at 5 to 234 (DFGRDVSGVR…DRRRYWVSSR (230 aa)) folds into the Radical SAM core domain. GTP is bound at residue R14. Positions 21 and 25 each coordinate [4Fe-4S] cluster. Y27 is an S-adenosyl-L-methionine binding site. A [4Fe-4S] cluster-binding site is contributed by C28. K68 provides a ligand contact to GTP. Residue G72 coordinates S-adenosyl-L-methionine. T96 lines the GTP pocket. Residue S120 coordinates S-adenosyl-L-methionine. K157 provides a ligand contact to GTP. Positions 232-256 (SSRDAGSTADDAAQSVTPDGGAHPD) are disordered. The [4Fe-4S] cluster site is built by C272 and C275. 277–279 (RVR) contributes to the GTP binding site. [4Fe-4S] cluster is bound at residue C289.

This sequence belongs to the radical SAM superfamily. MoaA family. [4Fe-4S] cluster serves as cofactor.

It carries out the reaction GTP + AH2 + S-adenosyl-L-methionine = (8S)-3',8-cyclo-7,8-dihydroguanosine 5'-triphosphate + 5'-deoxyadenosine + L-methionine + A + H(+). Its pathway is cofactor biosynthesis; molybdopterin biosynthesis. Its function is as follows. Catalyzes the cyclization of GTP to (8S)-3',8-cyclo-7,8-dihydroguanosine 5'-triphosphate. This chain is Probable GTP 3',8-cyclase, found in Halobacterium salinarum (strain ATCC 29341 / DSM 671 / R1).